The primary structure comprises 603 residues: MAAARRARAGDPRAGFRRAAEEQSPAVPQGLIRAARKSGQLNLAGRGLGEVPQHVWRINLDTPEEAHQNLSFGAADRWWEQTDLTKLILASNQLRCLSEDVRLLPALTVLDVHDNQLTSLPSALGQLENLQKLDVSHNKLKSIPEELLQLSHLKGLLLQHNELSHLPDGFGQLVSLEELDLSNNHLTDIPKSFALLINLVRLNLACNQLKDLPADISAMKSLRQLDCTKNYLESVPSELASMASLEQLYLRKNKLRSLPELPSCKLLKELHAGENQIEILNAENLKHLNSLSVLELRDNKIKSVPDEITLLQKLERLDLANNDISRLPYTLGNLSQLKFLALEGNPLRTIRRDLLQKGTQELLKYLRSRIQDDKASPNEEPPVTAMTLPSESRINMHAITTLKLLDYSEKQVAVIPDDVFSAVRSNPVTSVNFSKNQLTAIPPRIVELKDSVCDVNFGFNKISSVSLELCTLHKLTHLDIRNNVLTSLPEEMEALTRLQVINLSFNRFKVFPSVLYRMLALETILLSNNQVGSIDPLQLKKMEQLGTLDLQNNDLLQVPPELGNCETLRTLLLEGNPFRTPRAAILAKGTAAVLEYLRSRIPT.

The interval 1 to 27 (MAAARRARAGDPRAGFRRAAEEQSPAV) is disordered. LRR repeat units follow at residues 83–104 (DLTKLILASNQLRCLSEDVRLL), 106–127 (ALTVLDVHDNQLTSLPSALGQL), 129–150 (NLQKLDVSHNKLKSIPEELLQL), 152–173 (HLKGLLLQHNELSHLPDGFGQL), 175–196 (SLEELDLSNNHLTDIPKSFALL), 198–219 (NLVRLNLACNQLKDLPADISAM), 221–242 (SLRQLDCTKNYLESVPSELASM), 244–265 (SLEQLYLRKNKLRSLPELPSCK), 266–286 (LLKELHAGENQIEILNAENLK), 290–311 (SLSVLELRDNKIKSVPDEITLL), 313–335 (KLERLDLANNDISRLPYTLGNLS), 336–357 (QLKFLALEGNPLRTIRRDLLQK), 401–422 (TLKLLDYSEKQVAVIPDDVFSA), 427–449 (PVTSVNFSKNQLTAIPPRIVELK), 451–473 (SVCDVNFGFNKISSVSLELCTLH), 474–495 (KLTHLDIRNNVLTSLPEEMEAL), 497–518 (RLQVINLSFNRFKVFPSVLYRM), 520–541 (ALETILLSNNQVGSIDPLQLKK), 544–565 (QLGTLDLQNNDLLQVPPELGNC), and 567–588 (TLRTLLLEGNPFRTPRAAILAK).

In Gallus gallus (Chicken), this protein is Leucine-rich repeat-containing protein 40 (LRRC40).